Consider the following 355-residue polypeptide: MTASTSVAVGCAVGIPVGVGIIIAVCFWFNLQKRYKREEQDDRELERAIYDESGFVSFDNFGPLRDSKDEAALASSELKNPDHTSGSSEGSAHPEEKDGKSRDQEKPLGKKNSKYYVPAYRRKINLLQVRNNNYGNNARQKSVVDLPSINNSSNVSLSSSQRHITKRQISVYDQMVPVISDEGPKFFADPSSDTNTSNDQNKASMIELKHNTRQSINENLIRKLQNQDFGSYYPRRASSSFLNGNISNASFHTRNSSITSVNKRDALEDVFATPKSAAQSQLPNTFDKDNEGIDADHSVKDSRSAITDKDKDIYKLQNNYDVGNIGEIAEEDQYENEFTNYSQSKREFIESLRPK.

The Extracellular portion of the chain corresponds to 1 to 8 (MTASTSVA). The chain crosses the membrane as a helical; Signal-anchor for type III membrane protein span at residues 9 to 29 (VGCAVGIPVGVGIIIAVCFWF). At 30–355 (NLQKRYKREE…REFIESLRPK (326 aa)) the chain is on the cytoplasmic side. The disordered stretch occupies residues 70–114 (EAALASSELKNPDHTSGSSEGSAHPEEKDGKSRDQEKPLGKKNSK). Residues 92 to 108 (AHPEEKDGKSRDQEKPL) show a composition bias toward basic and acidic residues. A Phosphoserine modification is found at S142. A Phosphothreonine modification is found at T273. Residues 276–298 (SAAQSQLPNTFDKDNEGIDADHS) are disordered. A compositionally biased stretch (basic and acidic residues) spans 286–298 (FDKDNEGIDADHS).

It belongs to the SKG1 family.

It is found in the cell membrane. It localises to the bud membrane. In terms of biological role, plays a role in cell wall integrity. Affects the cell wall polymer composition in the growing region of the cell. The polypeptide is Suppressor of lethality of KEX2 GAS1 double null mutant protein 1 (SKG1) (Saccharomyces cerevisiae (strain Lalvin EC1118 / Prise de mousse) (Baker's yeast)).